A 361-amino-acid polypeptide reads, in one-letter code: Protein-glutamate methylesterase/protein-glutamine glutaminase 1 (361 aa).

Residues 10–127 (KVLVVDDSAL…REGIEEKAQE (118 aa)) enclose the Response regulatory domain. At D61 the chain carries 4-aspartylphosphate. Residues 167–359 (FATTDKLIAV…ASVKRWYAEN (193 aa)) form the CheB-type methylesterase domain. Residues S179, H205, and D301 contribute to the active site.

It belongs to the CheB family. Post-translationally, phosphorylated by CheA. Phosphorylation of the N-terminal regulatory domain activates the methylesterase activity.

The protein resides in the cytoplasm. It catalyses the reaction [protein]-L-glutamate 5-O-methyl ester + H2O = L-glutamyl-[protein] + methanol + H(+). The enzyme catalyses L-glutaminyl-[protein] + H2O = L-glutamyl-[protein] + NH4(+). In terms of biological role, involved in chemotaxis. Part of a chemotaxis signal transduction system that modulates chemotaxis in response to various stimuli. Catalyzes the demethylation of specific methylglutamate residues introduced into the chemoreceptors (methyl-accepting chemotaxis proteins or MCP) by CheR. Also mediates the irreversible deamidation of specific glutamine residues to glutamic acid. The protein is Protein-glutamate methylesterase/protein-glutamine glutaminase 1 of Hahella chejuensis (strain KCTC 2396).